A 596-amino-acid chain; its full sequence is Transketolase-like protein 1 (596 aa).

Histidine 46 is a substrate binding site. Thiamine diphosphate is bound by residues serine 49 and 94–96 (GWL). Aspartate 126 is a binding site for Mg(2+). Residues glycine 127 and asparagine 156 each coordinate thiamine diphosphate. 2 residues coordinate Mg(2+): asparagine 156 and leucine 158. Thiamine diphosphate is bound by residues lysine 218 and histidine 232. Histidine 232, arginine 292, and serine 319 together coordinate substrate. 2 residues coordinate thiamine diphosphate: glutamate 340 and phenylalanine 366. Catalysis depends on glutamate 340, which acts as the Proton donor. Substrate-binding residues include histidine 390 and aspartate 398. Glutamine 402 lines the thiamine diphosphate pocket. Arginine 448 contacts substrate.

The protein belongs to the transketolase family. In terms of assembly, homodimer. Mg(2+) serves as cofactor. It depends on Ca(2+) as a cofactor. Requires Mn(2+) as cofactor. Co(2+) is required as a cofactor. The cofactor is thiamine diphosphate. In terms of tissue distribution, widely expressed. Expressed in endothelial cells and in peripheral neurons (at protein level). Not expressed in fetal neocortex. As to expression, expressed in fetal neocortex.

The protein localises to the cytoplasm. It carries out the reaction D-sedoheptulose 7-phosphate + D-glyceraldehyde 3-phosphate = aldehydo-D-ribose 5-phosphate + D-xylulose 5-phosphate. In terms of biological role, catalyzes the transfer of a two-carbon ketol group from a ketose donor to an aldose acceptor, via a covalent intermediate with the cofactor thiamine pyrophosphate. Functionally, during fetal neocortex development, may be essential to maintain the full number of basal radial glia (bRG). bRG are neural progenitor cells that undergo asymmetric divisions, generating a bRG (self-renewal) and a neuron, in contrast to basal intermediate progenitors (bIPs), which typically divide once to give rise to 2 neurons. bRG generate more cortical neurons over time than bIPs. The protein is Transketolase-like protein 1 (TKTL1) of Homo sapiens (Human).